The chain runs to 162 residues: Protein cornichon homolog 2 (162 aa).

Residues Met1 to Tyr10 are Cytoplasmic-facing. Residues Met11 to Phe31 traverse the membrane as a helical segment. The Lumenal portion of the chain corresponds to Asp32–Tyr72. Residues Cys73–Leu93 traverse the membrane as a helical segment. Residues Asn94–Lys138 are Cytoplasmic-facing. The helical transmembrane segment at Leu139 to Ser161 threads the bilayer. A topological domain (lumenal) is located at residue Ala162.

This sequence belongs to the cornichon family.

The protein resides in the membrane. Regulates the trafficking and gating properties of AMPA-selective glutamate receptors (AMPARs). In Xenopus laevis (African clawed frog), this protein is Protein cornichon homolog 2 (cnih2).